A 438-amino-acid chain; its full sequence is MSTLEELDALDQSQQGGSSNNEGLDGIEQEILAAGIDELNSRTRLLENDIKVMKSEFQRLTHEKSTMLEKIKENQEKISNNKMLPYLVGNVVEILDMQPDEVDVQESANQNSEATRVGKSAVIKTSTRQTIFLPLIGLVEPEELHPGDLIGVNKDSYLIIDKLPSEYDSRVKAMEVDEKPTERYSDIGGLSKQIEELFEAIVLPMQQADKFRKLGVKPPKGCLMFGPPGTGKTLLARACAAQSNATFLKLAAPQLVQMFIGDGAKLVRDAFALAKEKSPAIIFIDELDAIGTKRFDSEKAGDREVQRTMLELLNQLDGFSSDDRVKVIAATNRVDTLDPALLRSGRLDRKLEFPLPNEEARVGILRIHSRKMAIDDDINWEELARSTDEYNGAMLKSVCVEAGMIALRQGDTKINHEHFMDGILEVQMRKSKTLQYFA.

The disordered stretch occupies residues 1–24 (MSTLEELDALDQSQQGGSSNNEGL). Residues 11-22 (DQSQQGGSSNNE) show a composition bias toward polar residues. ATP is bound at residue 226–233 (GPPGTGKT).

This sequence belongs to the AAA ATPase family.

The protein resides in the cytoplasm. It is found in the nucleus. Functionally, the 26S proteasome is involved in the ATP-dependent degradation of ubiquitinated proteins. The regulatory (or ATPase) complex confers ATP dependency and substrate specificity to the 26S complex. This is 26S proteasome regulatory subunit 6A (tbp1) from Schizosaccharomyces pombe (strain 972 / ATCC 24843) (Fission yeast).